The chain runs to 349 residues: Phenylalanine--tRNA ligase alpha subunit (349 aa).

Glutamate 259 is a binding site for Mg(2+).

This sequence belongs to the class-II aminoacyl-tRNA synthetase family. Phe-tRNA synthetase alpha subunit type 1 subfamily. Tetramer of two alpha and two beta subunits. Requires Mg(2+) as cofactor.

It localises to the cytoplasm. The enzyme catalyses tRNA(Phe) + L-phenylalanine + ATP = L-phenylalanyl-tRNA(Phe) + AMP + diphosphate + H(+). In Lactobacillus delbrueckii subsp. bulgaricus (strain ATCC 11842 / DSM 20081 / BCRC 10696 / JCM 1002 / NBRC 13953 / NCIMB 11778 / NCTC 12712 / WDCM 00102 / Lb 14), this protein is Phenylalanine--tRNA ligase alpha subunit.